The primary structure comprises 609 residues: Threonine--tRNA ligase (609 aa).

The segment at 215–506 (DHRIIGNEMK…LIEHTAGELP (292 aa)) is catalytic. Residues Cys307, His358, and His483 each contribute to the Zn(2+) site.

This sequence belongs to the class-II aminoacyl-tRNA synthetase family. Homodimer. Requires Zn(2+) as cofactor.

The protein resides in the cytoplasm. It catalyses the reaction tRNA(Thr) + L-threonine + ATP = L-threonyl-tRNA(Thr) + AMP + diphosphate + H(+). Catalyzes the attachment of threonine to tRNA(Thr) in a two-step reaction: L-threonine is first activated by ATP to form Thr-AMP and then transferred to the acceptor end of tRNA(Thr). Also edits incorrectly charged L-seryl-tRNA(Thr). This is Threonine--tRNA ligase from Campylobacter hominis (strain ATCC BAA-381 / DSM 21671 / CCUG 45161 / LMG 19568 / NCTC 13146 / CH001A).